Reading from the N-terminus, the 485-residue chain is Acyl transferase 1 (485 aa).

H172 (proton acceptor) is an active-site residue.

Belongs to the plant acyltransferase family. As to expression, highly expressed in young panicles. Expressed in leaf sheaths and panicles.

Functionally, involved in defense against pathogens. May contribute to disease resistance by potentiating disease resistance signaling, or producing phytoalexin-like secondary products. This chain is Acyl transferase 1, found in Oryza sativa subsp. japonica (Rice).